We begin with the raw amino-acid sequence, 310 residues long: MVKVYAPASSANMSVGFDVLGAAVTPVDGALLGDVVTVEAAETFSLNNLGRFADKLPSEPRENIVYQCWERFCQELGKQIPVAMTLEKNMPIGSGLGSSACSVVAALMAMNEHCGKPLNDTRLLALMGELEGRISGSIHYDNVAPCFLGGMQLMIEENDIISQQVPGFDEWLWVLAYPGIKVSTAEARAILPAQYRRQDCIAHGRHLAGFIHACYSRQPELAAKLMKDVIAEPYRERLLPGFRQARQAVAEIGAVASGISGSGPTLFALCDKPETAQRVADWLGKNYLQNQEGFVHICQLDTAGARVLEN.

91–101 (PIGSGLGSSAC) is a binding site for ATP.

This sequence belongs to the GHMP kinase family. Homoserine kinase subfamily.

The protein localises to the cytoplasm. The catalysed reaction is L-homoserine + ATP = O-phospho-L-homoserine + ADP + H(+). It participates in amino-acid biosynthesis; L-threonine biosynthesis; L-threonine from L-aspartate: step 4/5. Catalyzes the ATP-dependent phosphorylation of L-homoserine to L-homoserine phosphate. The polypeptide is Homoserine kinase (Escherichia coli (strain SMS-3-5 / SECEC)).